A 271-amino-acid chain; its full sequence is Probable redox regulatory protein SCO3349 (271 aa).

Disordered stretches follow at residues 1 to 21 (MPKT…KHIA) and 109 to 130 (AEGT…TRPF). A compositionally biased stretch (basic and acidic residues) spans 7–21 (AKDEKSAKKDKKHIA).

It belongs to the Rv0495c family.

In terms of biological role, essential for maintaining intracellular redox homeostasis. This Streptomyces coelicolor (strain ATCC BAA-471 / A3(2) / M145) protein is Probable redox regulatory protein SCO3349.